Here is a 105-residue protein sequence, read N- to C-terminus: Dynein axonemal light chain 4 (105 aa).

This sequence belongs to the dynein light chain family. Consists of at least two heavy chains and a number of intermediate and light chains.

It is found in the cytoplasm. The protein localises to the cytoskeleton. It localises to the cilium axoneme. Its function is as follows. Force generating protein of respiratory cilia. Produces force towards the minus ends of microtubules. Dynein has ATPase activity. The polypeptide is Dynein axonemal light chain 4 (DNAL4) (Bos taurus (Bovine)).